Consider the following 236-residue polypeptide: Oligogalacturonate-specific porin KdgM (236 aa).

An N-terminal signal peptide occupies residues M1–A20.

It belongs to the oligogalacturonate-specific porin KdgM (TC 1.B.35) family. In terms of assembly, monomer.

Its subcellular location is the cell outer membrane. In terms of biological role, porin specific for oligogalacturonides. Also required for full virulence. The chain is Oligogalacturonate-specific porin KdgM (kdgM) from Dickeya dadantii (strain 3937) (Erwinia chrysanthemi (strain 3937)).